A 261-amino-acid polypeptide reads, in one-letter code: Carnitinyl-CoA dehydratase (261 aa).

Glutamate 111 serves as the catalytic Nucleophile. Glutamate 131 (proton acceptor) is an active-site residue.

Belongs to the enoyl-CoA hydratase/isomerase family.

It carries out the reaction (R)-carnitinyl-CoA = crotonobetainyl-CoA + H2O. It participates in amine and polyamine metabolism; carnitine metabolism. Its function is as follows. Catalyzes the reversible dehydration of L-carnitinyl-CoA to crotonobetainyl-CoA. This is Carnitinyl-CoA dehydratase from Escherichia coli O157:H7.